We begin with the raw amino-acid sequence, 338 residues long: Tetraacyldisaccharide 4'-kinase (338 aa).

51–58 (HLGGAGKT) lines the ATP pocket.

It belongs to the LpxK family.

It carries out the reaction a lipid A disaccharide + ATP = a lipid IVA + ADP + H(+). It functions in the pathway glycolipid biosynthesis; lipid IV(A) biosynthesis; lipid IV(A) from (3R)-3-hydroxytetradecanoyl-[acyl-carrier-protein] and UDP-N-acetyl-alpha-D-glucosamine: step 6/6. Functionally, transfers the gamma-phosphate of ATP to the 4'-position of a tetraacyldisaccharide 1-phosphate intermediate (termed DS-1-P) to form tetraacyldisaccharide 1,4'-bis-phosphate (lipid IVA). This is Tetraacyldisaccharide 4'-kinase from Rhodopseudomonas palustris (strain HaA2).